Here is a 111-residue protein sequence, read N- to C-terminus: DIVLTQSPASLAVSLGQRATISCKASQSVDYTGESYMNWYQQNPGQSPKLLIYAASNLESGIPARFSGSGSGTDFTLNIHPVEEEDAATYYCQQSNEDPYTFGGGTKLEIK.

The tract at residues 1 to 23 (DIVLTQSPASLAVSLGQRATISC) is framework-1. Cysteines 23 and 92 form a disulfide. Positions 24 to 38 (KASQSVDYTGESYMN) are complementarity-determining-1. The segment at 39–53 (WYQQNPGQSPKLLIY) is framework-2. The interval 54-60 (AASNLES) is complementarity-determining-2. Positions 61-92 (GIPARFSGSGSGTDFTLNIHPVEEEDAATYYC) are framework-3. A complementarity-determining-3 region spans residues 93–101 (QQSNEDPYT). Residues 102-111 (FGGGTKLEIK) are framework-4.

This is Ig kappa chain V-III region CBPC 101 from Mus musculus (Mouse).